The sequence spans 250 residues: Flavin-dependent thymidylate synthase (250 aa).

Positions 7-233 constitute a ThyX domain; it reads LSVELIACSS…PTVFGDFQVE (227 aa). Residues 92–95, 103–107, and Arg-172 contribute to the dUMP site; these read ELVR and QLSQR. Residues 95 to 97 and Gln-103 contribute to the FAD site; that span reads RHR. Residues 95 to 105 carry the ThyX motif motif; sequence RHRHFSFSQLS. FAD-binding positions include 188-190 and His-194; that span reads NFR. Arg-199 contacts dUMP. Arg-199 functions as the Involved in ionization of N3 of dUMP, leading to its activation in the catalytic mechanism.

It belongs to the thymidylate synthase ThyX family. As to quaternary structure, homotetramer. Requires FAD as cofactor.

It catalyses the reaction dUMP + (6R)-5,10-methylene-5,6,7,8-tetrahydrofolate + NADPH + H(+) = dTMP + (6S)-5,6,7,8-tetrahydrofolate + NADP(+). It participates in pyrimidine metabolism; dTTP biosynthesis. Catalyzes the reductive methylation of 2'-deoxyuridine-5'-monophosphate (dUMP) to 2'-deoxythymidine-5'-monophosphate (dTMP) while utilizing 5,10-methylenetetrahydrofolate (mTHF) as the methyl donor, and NADPH and FADH(2) as the reductant. The chain is Flavin-dependent thymidylate synthase from Corynebacterium efficiens (strain DSM 44549 / YS-314 / AJ 12310 / JCM 11189 / NBRC 100395).